The sequence spans 392 residues: Formate-dependent phosphoribosylglycinamide formyltransferase (392 aa).

Residues 22 to 23 and Glu82 contribute to the N(1)-(5-phospho-beta-D-ribosyl)glycinamide site; that span reads EL. Residues Arg114, Lys155, 160–165, 195–198, and Glu203 each bind ATP; these read SSGKGQ and EGVV. Residues 119–308 form the ATP-grasp domain; the sequence is RLAAEELQLP…EFALHVRAFL (190 aa). Mg(2+)-binding residues include Glu267 and Glu279. N(1)-(5-phospho-beta-D-ribosyl)glycinamide contacts are provided by residues Asp286, Lys355, and 362–363; that span reads RR.

It belongs to the PurK/PurT family. As to quaternary structure, homodimer.

The enzyme catalyses N(1)-(5-phospho-beta-D-ribosyl)glycinamide + formate + ATP = N(2)-formyl-N(1)-(5-phospho-beta-D-ribosyl)glycinamide + ADP + phosphate + H(+). It functions in the pathway purine metabolism; IMP biosynthesis via de novo pathway; N(2)-formyl-N(1)-(5-phospho-D-ribosyl)glycinamide from N(1)-(5-phospho-D-ribosyl)glycinamide (formate route): step 1/1. In terms of biological role, involved in the de novo purine biosynthesis. Catalyzes the transfer of formate to 5-phospho-ribosyl-glycinamide (GAR), producing 5-phospho-ribosyl-N-formylglycinamide (FGAR). Formate is provided by PurU via hydrolysis of 10-formyl-tetrahydrofolate. The protein is Formate-dependent phosphoribosylglycinamide formyltransferase of Klebsiella pneumoniae (strain 342).